Reading from the N-terminus, the 179-residue chain is Large ribosomal subunit protein uL6 (179 aa).

The protein belongs to the universal ribosomal protein uL6 family. As to quaternary structure, part of the 50S ribosomal subunit.

Functionally, this protein binds to the 23S rRNA, and is important in its secondary structure. It is located near the subunit interface in the base of the L7/L12 stalk, and near the tRNA binding site of the peptidyltransferase center. This chain is Large ribosomal subunit protein uL6, found in Chlorobium chlorochromatii (strain CaD3).